The following is a 477-amino-acid chain: Transposase for insertion sequence element IS231F (477 aa).

It belongs to the transposase 11 family.

Involved in the transposition of the insertion sequence. The protein is Transposase for insertion sequence element IS231F of Bacillus thuringiensis subsp. israelensis.